The sequence spans 410 residues: Cytochrome P450 CYP107DY1 (410 aa).

Heme-binding residues include His106 and Arg110. Residues Thr249 and Glu253 each contribute to the substrate site. Heme contacts are provided by Arg302, His358, and Cys360.

It belongs to the cytochrome P450 family. Requires heme as cofactor.

The enzyme catalyses mevastatin + 2 reduced [2Fe-2S]-[ferredoxin] + O2 + 2 H(+) = pravastatin lactone + 2 oxidized [2Fe-2S]-[ferredoxin] + H2O. In terms of biological role, cytochrome P450 whose physiological substrate is unknown. In vitro, is able to catalyze the selective hydroxylation of mevastatin to pravastatin, the widely used therapeutic agent for hypercholesterolemia. The sequence is that of Cytochrome P450 CYP107DY1 from Priestia megaterium (strain ATCC 12872 / QMB1551) (Bacillus megaterium).